The following is an 816-amino-acid chain: MNGKYRGRGFGQGRFQSWKSGRGGRGFSGKWREREHRPDLNKATGKHPEQTPQSLLLQSTLDHFIPYKGWKLYFSEVYSDSIPFIEKIEAFESFFTERIELYDKDEIERKGSILVDFKELINDDEIIKLIPNIANELRDTPEKTLACMGLAIHQVLTKDLERHAAELQAQEGLSRNGETVVNVPHIHARVYNYEPLTQLKNVRANYYGKYIALRGTVVRVSNTKPLCTKMAFLCAACGEIQSLSLPDGKYNLPTKCPVPACRGKSFTALRSSPLTVTMDWQSIKIQELMSDDQREAGRIPRTIECELVHDLVDSCVPGDTVTITGVVKVSNAEEANSVSNNKGQKTKASEDGCKHGALMEFSLKDLYAIQEIQSEENLFKLIVNSLCPVIFGHELVKAGLALALFGGSQKYADDKNRIPIRGDPHVLVVGDPGLGKSQMLQAVCSVAPRGVYVCGNTTTTSGLTVTLSKDSSSGDFALEAGALVLGDQGICGIDEFDKMGNQHQALLEAMEQQSISLAKAGMVCSLPARTSIIAAANPVGGHYNKAKTVSENLKMGSALLSRFDLVFILLDTPNEDHDHLLSEHVIAIRAGKQRAVSSATVARMNSQDSNTSILEVVSDKPLSERLKVVPGETIDPIPHQLLRKYIGYSRQYVYPRLSTEAAQILQNFYLELRKQSQRLSSSPITTRQLESLIRLTEARARLELREEATKEDAEDIVEIMKYSMLGTYSDEFGNLDFERSQHGSGMSNRSAAKRFISALNKIAERTYNNLFQFHQLQQIAKELNIQVADFENFIGSLNDQGYLLKKGPKVYQLQTM.

A disordered region spans residues 1 to 52 (MNGKYRGRGFGQGRFQSWKSGRGGRGFSGKWREREHRPDLNKATGKHPEQTP). Positions 30–40 (KWREREHRPDL) are enriched in basic and acidic residues. Residues 378 to 585 (LFKLIVNSLC…DHDHLLSEHV (208 aa)) form the MCM domain. Position 430 to 437 (430 to 437 (GDPGLGKS)) interacts with ATP. Position 606 is a phosphoserine (Ser606).

It belongs to the MCM family. Component of the MCM8-MCM9 complex, which forms a hexamer composed of MCM8 and MCM9. Interacts with the DNA mismatch repair (MMR) complex composed at least of MSH2, MSH3, MSH6, PMS1 and MLH1. Interacts with RAD51; the interaction recruits RAD51 to DNA damage sites. Interacts with the MRN complex composed of MRE11, RAD50 and NBN/NBS1. Interacts with CDC6 and ORC2. Interacts with HROB; the interaction recruits the MCM8-MCM9 complex to DNA damage sites.

The protein resides in the nucleus. Its subcellular location is the chromosome. The catalysed reaction is ATP + H2O = ADP + phosphate + H(+). Its function is as follows. Component of the MCM8-MCM9 complex, a complex involved in the repair of double-stranded DNA breaks (DBSs) and DNA interstrand cross-links (ICLs) by homologous recombination (HR). Required for DNA resection by the MRE11-RAD50-NBN/NBS1 (MRN) complex by recruiting the MRN complex to the repair site and by promoting the complex nuclease activity. Probably by regulating the localization of the MNR complex, indirectly regulates the recruitment of downstream effector RAD51 to DNA damage sites including DBSs and ICLs. The MCM8-MCM9 complex is dispensable for DNA replication and S phase progression. However, may play a non-essential for DNA replication: may be involved in the activation of the prereplicative complex (pre-RC) during G(1) phase by recruiting CDC6 to the origin recognition complex (ORC). Probably by regulating HR, plays a key role during gametogenesis. Stabilizes MCM9 protein. This chain is DNA helicase MCM8 (MCM8), found in Bos taurus (Bovine).